Here is a 530-residue protein sequence, read N- to C-terminus: MKFVEIRDLQVTYMGKTKPSIVIDKLDIEEGESVLITGRSGSGKSTLVSVINGVIPHLINAEVKGEVRVFGLDIKTTPTSEISRYVGTLLQDPDTQAFNYTVIDEVAFGVENYMVSREEMINRVEESMKICGISHLRDREINTLSGGELQRTVLASVLAMRPKALILDEPTSNIDPQGTREILELVKTFRSEGISLVLVEHKIERVLPFIDRIIVVESGKIAVDIKKDEIIDRADLLHSLGLEIPDYMLFLKKSGFRRIDYEYLRKTYNYKPPSRNEGKGEILFASVKVKTKSGKYLINTKISLKQGTITALMGKNGSGKTTLLKAIVGLIDKKRLIVEEEKVIVNGKDLSKAKLVERGKYLAYLPQFFDVMFIKRTVEDEVKFSMKNRGVYDEMRLGEILRIFSLDAYRTEDPLVLSMGQRRRVAMASVIAGGAKVILMDEPTSGQDWYHRQILGKELLELRNKGYTILVVTHDARFVDRFTDYLLVMSDGKIVLEGKPEEVFSKSLNHGIEPPLEYELGGLIKNEQFS.

2 ABC transporter domains span residues 6 to 243 (IRDL…LGLE) and 282 to 516 (ILFA…EPPL). ATP-binding positions include 38–45 (GRSGSGKS) and 314–321 (GKNGSGKT).

This sequence belongs to the ABC transporter superfamily.

The protein resides in the cell membrane. Functionally, probably part of an ABC transporter complex. Responsible for energy coupling to the transport system. The chain is Putative ABC transporter ATP-binding protein SSO1893 from Saccharolobus solfataricus (strain ATCC 35092 / DSM 1617 / JCM 11322 / P2) (Sulfolobus solfataricus).